A 423-amino-acid polypeptide reads, in one-letter code: Putative competence-damage inducible protein (423 aa).

The protein belongs to the CinA family.

This is Putative competence-damage inducible protein from Streptococcus uberis (strain ATCC BAA-854 / 0140J).